A 463-amino-acid chain; its full sequence is MSSVTGSGITSGFIDLATYDNLERAMYGGSDATTYFVKEHYPVGWFTKLPSLAAKMSGNPAFGQQFSVGVPRSGDYILNAWLVLKTPEVELLAANQLGDNGTIRWTKNPMHNIVESVTLSFNDISAQSFNTAYLDAWSEYTMPEAKRTGYYNMIGNTSDLINPAPATGQDGARVLPAKNLVLPLPFFFSRDSGLALPVVSLPYNEIRITVKLRAIHDLLILQHNTTGAISPIVASDLAGGLPDTVEANVYMTVALITGDERQAMSSTVRDMVVEQVQAAPVHMVNPRNATTFHTDMRFSHAVKALMFMVQNVTHPSVGSNYTCVTPVVGVGNTVLEPALAVDPVKSASLVYENTTRLPDMGVEYYSLVEPWYYATSIPVSTGHHLYSYALSLQDPHPSGSTNYGRLTNASLNVTLSAEATTAAAGGGGNNSGYTTAQKYALIVLAINHNIIRIMNGSMGFPIL.

Belongs to the NCLDV major capsid protein family. In terms of assembly, homomultimer.

It is found in the virion. Functionally, major capsid protein that self assembles to form a T=133 or T=147 icosahedral capsid. The protein is Major capsid protein of Dryophytes versicolor (chameleon treefrog).